The following is a 421-amino-acid chain: 4-hydroxy-3-methylbut-2-en-1-yl diphosphate synthase (flavodoxin) (421 aa).

4 residues coordinate [4Fe-4S] cluster: Cys298, Cys301, Cys344, and Glu351.

It belongs to the IspG family. [4Fe-4S] cluster is required as a cofactor.

The catalysed reaction is (2E)-4-hydroxy-3-methylbut-2-enyl diphosphate + oxidized [flavodoxin] + H2O + 2 H(+) = 2-C-methyl-D-erythritol 2,4-cyclic diphosphate + reduced [flavodoxin]. The protein operates within isoprenoid biosynthesis; isopentenyl diphosphate biosynthesis via DXP pathway; isopentenyl diphosphate from 1-deoxy-D-xylulose 5-phosphate: step 5/6. In terms of biological role, converts 2C-methyl-D-erythritol 2,4-cyclodiphosphate (ME-2,4cPP) into 1-hydroxy-2-methyl-2-(E)-butenyl 4-diphosphate. The sequence is that of 4-hydroxy-3-methylbut-2-en-1-yl diphosphate synthase (flavodoxin) from Neisseria gonorrhoeae (strain ATCC 700825 / FA 1090).